We begin with the raw amino-acid sequence, 524 residues long: Lycopene epsilon cyclase, chloroplastic (524 aa).

A chloroplast-targeting transit peptide spans 1–45; that stretch reads MECVGARNFAAMAVSTFPSWSCRRKFPVVKRYSYRNIRFGLCSVR. 111-139 provides a ligand contact to NAD(+); the sequence is LVVIGCGPAGLALAAESAKLGLKVGLIGP. The next 2 membrane-spanning stretches (helical) occupy residues 441 to 461 and 475 to 495; these read FFLF…RSFF and FLGS…MFVI.

The protein belongs to the lycopene cyclase family.

It is found in the plastid. The protein resides in the chloroplast membrane. It carries out the reaction a carotenoid psi-end group = a carotenoid epsilon-end group. Its pathway is carotenoid biosynthesis; alpha-zeacarotene biosynthesis. It participates in carotenoid biosynthesis; delta-carotene biosynthesis. In terms of biological role, involved in carotenoid biosynthesis. Catalyzes the single epsilon-cyclization reaction which converts lycopene to delta-carotene and neurosporene to alpha-zeacarotene. Required for lutein biosynthesis. This is Lycopene epsilon cyclase, chloroplastic from Arabidopsis thaliana (Mouse-ear cress).